The primary structure comprises 206 residues: Small ribosomal subunit protein uS4 (206 aa).

The interval 28–52 is disordered; that stretch reads YLDRRPYAPGQHGQRRGRGRPSDYS. Residues 96–171 form the S4 RNA-binding domain; it reads RRLDNVVFRM…QKRRRVSPWI (76 aa).

This sequence belongs to the universal ribosomal protein uS4 family. In terms of assembly, part of the 30S ribosomal subunit. Contacts protein S5. The interaction surface between S4 and S5 is involved in control of translational fidelity.

Its function is as follows. One of the primary rRNA binding proteins, it binds directly to 16S rRNA where it nucleates assembly of the body of the 30S subunit. Functionally, with S5 and S12 plays an important role in translational accuracy. The chain is Small ribosomal subunit protein uS4 from Deinococcus geothermalis (strain DSM 11300 / CIP 105573 / AG-3a).